A 334-amino-acid chain; its full sequence is Ketol-acid reductoisomerase (NADP(+)) (334 aa).

In terms of domain architecture, KARI N-terminal Rossmann spans 2 to 182 (PKMYYEKDTD…GGARAGVLET (181 aa)). Residues 25 to 28 (YGSQ), Ser-51, Ser-53, and 83 to 86 (DEKQ) contribute to the NADP(+) site. His-108 is a catalytic residue. Gly-134 provides a ligand contact to NADP(+). Residues 183–328 (TFKDETETDL…KELRGMMSWI (146 aa)) form the KARI C-terminal knotted domain. Mg(2+)-binding residues include Asp-191, Glu-195, Glu-227, and Glu-231. Residue Ser-252 participates in substrate binding.

The protein belongs to the ketol-acid reductoisomerase family. Mg(2+) serves as cofactor.

The enzyme catalyses (2R)-2,3-dihydroxy-3-methylbutanoate + NADP(+) = (2S)-2-acetolactate + NADPH + H(+). The catalysed reaction is (2R,3R)-2,3-dihydroxy-3-methylpentanoate + NADP(+) = (S)-2-ethyl-2-hydroxy-3-oxobutanoate + NADPH + H(+). It functions in the pathway amino-acid biosynthesis; L-isoleucine biosynthesis; L-isoleucine from 2-oxobutanoate: step 2/4. Its pathway is amino-acid biosynthesis; L-valine biosynthesis; L-valine from pyruvate: step 2/4. Functionally, involved in the biosynthesis of branched-chain amino acids (BCAA). Catalyzes an alkyl-migration followed by a ketol-acid reduction of (S)-2-acetolactate (S2AL) to yield (R)-2,3-dihydroxy-isovalerate. In the isomerase reaction, S2AL is rearranged via a Mg-dependent methyl migration to produce 3-hydroxy-3-methyl-2-ketobutyrate (HMKB). In the reductase reaction, this 2-ketoacid undergoes a metal-dependent reduction by NADPH to yield (R)-2,3-dihydroxy-isovalerate. In Clostridium beijerinckii (strain ATCC 51743 / NCIMB 8052) (Clostridium acetobutylicum), this protein is Ketol-acid reductoisomerase (NADP(+)).